Consider the following 683-residue polypeptide: Leucine-rich repeat and calponin homology domain-containing protein 4 (683 aa).

Over residues 1 to 18 (MAAAVAAPLAAGGEEAAA) the composition is skewed to low complexity. The disordered stretch occupies residues 1-34 (MAAAVAAPLAAGGEEAAATTSVPGSPGLPGRRSA). LRR repeat units follow at residues 41–64 (AVAT…AARS), 67–90 (LSDI…ACQL), 92–113 (SLEG…LGNL), 114–136 (TALT…ICQL), 138–158 (LRVL…IGTL), 159–181 (GSLR…LCGL), 182–204 (SSLR…LGDL), 206–226 (LVRL…FCRL), and 227–250 (RHLQ…CLKG). The tract at residues 268-292 (ALGDLAPSRPPSFSPCPAEDLFPGH) is disordered. S279, S281, S304, S307, S309, and S313 each carry phosphoserine. 2 disordered regions span residues 326-436 (FRIS…LLKP) and 449-539 (STQA…DEKD). Composition is skewed to basic and acidic residues over residues 330 to 345 (ELAR…KEDG), 357 to 376 (IDSH…EQRP), and 384 to 418 (GDRE…ERRQ). 2 positions are modified to phosphoserine: S432 and S457. The segment covering 449–460 (STQAMHNGSPKS) has biased composition (polar residues). Composition is skewed to low complexity over residues 461–481 (SASQ…PASQ) and 511–524 (SSSQ…SPDS). Phosphoserine is present on residues S511, S513, S517, S521, and S589. One can recognise a Calponin-homology (CH) domain in the interval 534–647 (VPDEKDLMTQ…ALEAVKRVGG (114 aa)). Residues 653-673 (LWPPSGLGGFVVFYVVLMLLL) form a helical membrane-spanning segment.

Its subcellular location is the cell membrane. Accessory protein that regulates signaling by multiple TLRs, acting as a broad-spanning regulator of the innate immune response. In macrophages, binds LPS and promotes proper docking of LPS in lipid raft membrane. May be required for lipid raft maintenance. This Homo sapiens (Human) protein is Leucine-rich repeat and calponin homology domain-containing protein 4.